The sequence spans 356 residues: tRNA N6-adenosine threonylcarbamoyltransferase (356 aa).

Residues histidine 115 and histidine 119 each contribute to the Fe cation site. Residues leucine 138 to glycine 142, aspartate 171, glycine 184, and asparagine 277 contribute to the substrate site. Position 305 (aspartate 305) interacts with Fe cation.

It belongs to the KAE1 / TsaD family. Fe(2+) is required as a cofactor.

The protein resides in the cytoplasm. The catalysed reaction is L-threonylcarbamoyladenylate + adenosine(37) in tRNA = N(6)-L-threonylcarbamoyladenosine(37) in tRNA + AMP + H(+). Required for the formation of a threonylcarbamoyl group on adenosine at position 37 (t(6)A37) in tRNAs that read codons beginning with adenine. Is involved in the transfer of the threonylcarbamoyl moiety of threonylcarbamoyl-AMP (TC-AMP) to the N6 group of A37, together with TsaE and TsaB. TsaD likely plays a direct catalytic role in this reaction. In Polaromonas naphthalenivorans (strain CJ2), this protein is tRNA N6-adenosine threonylcarbamoyltransferase.